Consider the following 160-residue polypeptide: Transcription elongation factor GreA (160 aa).

The stretch at 1–72 (MAEKTYPMTL…QISSLETKIR (72 aa)) forms a coiled coil.

It belongs to the GreA/GreB family.

Functionally, necessary for efficient RNA polymerase transcription elongation past template-encoded arresting sites. The arresting sites in DNA have the property of trapping a certain fraction of elongating RNA polymerases that pass through, resulting in locked ternary complexes. Cleavage of the nascent transcript by cleavage factors such as GreA or GreB allows the resumption of elongation from the new 3'terminus. GreA releases sequences of 2 to 3 nucleotides. This is Transcription elongation factor GreA from Streptococcus pneumoniae serotype 4 (strain ATCC BAA-334 / TIGR4).